Here is a 467-residue protein sequence, read N- to C-terminus: MSTLVNALGFFTSSTPAAAATKDVRSKEEILKRRKDTIGSKCQIFYSDDPFMVSRASMQYLYDEKSNKFLDCISNVQHVGHCHPKVVEAISKQLATSTCNVRFVSTQLTDCAEQILSTLPGLDTVLFCNSGSEANDLALRLARDYTKHKDAIVIEHAYHGHVTTTMELSPYKFDHGSTVSQPDWVHVAPCPDVFRGKHRLADNELTNEDKLYAAGKQYSDDVKSILNDVESRQCGVAAYFAEALQSCGGQVIPPKDYFKDVATHVRNHGGLMIIDEVQTGFGRIGRKYWAHQLYDDGFLPDIVTMGKPMGNGFPVSAVATRKEIADALGGEVGYFNTYGGNPVACAAVISVMKVVKDENLLEHSQQMGEKLEVALRDLQKKHECIGDIRGVGLFWGIDLVKDRNTREPDQKLAIATILALRKSYGILLNADGPHTNILKIKPPLCFNENNILETVTALDQVLTLMNR.

Lysine 307 carries the N6-(pyridoxal phosphate)lysine modification.

The protein belongs to the class-III pyridoxal-phosphate-dependent aminotransferase family. Pyridoxal 5'-phosphate serves as cofactor.

This chain is Ethanolamine-phosphate phospho-lyase homolog 1, found in Caenorhabditis elegans.